The sequence spans 464 residues: Probable 3-ketoacyl-CoA synthase 21 (464 aa).

The helical transmembrane segment at 21 to 41 threads the bilayer; that stretch reads LLSSGVSVFEIFAGLLVVHLI. An FAE domain is found at 42-333; the sequence is YQRIRTRVKV…VIQHILCKKL (292 aa). Residues Cys-187, His-352, His-356, His-385, and Asn-389 contribute to the active site.

The protein belongs to the thiolase-like superfamily. Chalcone/stilbene synthases family. In terms of tissue distribution, expressed in flowers.

The protein localises to the membrane. It carries out the reaction a very-long-chain acyl-CoA + malonyl-CoA + H(+) = a very-long-chain 3-oxoacyl-CoA + CO2 + CoA. It participates in lipid metabolism; fatty acid biosynthesis. This Arabidopsis thaliana (Mouse-ear cress) protein is Probable 3-ketoacyl-CoA synthase 21.